The following is a 254-amino-acid chain: Winged helix repair factor 1 (254 aa).

Residues 4-21 (KRRLLASEAFGVKRRRAP) carry the Bipartite nuclear localization signal motif. Winged helix domain regions lie at residues 32–104 (RAGS…GIVF), 120–179 (PCAG…LAVP), and 180–254 (GAGR…LPDT).

This sequence belongs to the STK19 family. Monomer in solution. Homodimer; when bound to DNA. Component of a transcription-coupled nucleotide excision repair (TC-NER) complex composed of STK19, ERCC6, ERCC8, DDA1, DDB1, ELOF1 and UVSSA which assembles and interacts with the multiprotein RNA polymerase II complex when it stalls at DNA lesions.

It localises to the nucleus. In terms of biological role, DNA-binding protein which is required for efficient transcription-coupled nucleotide excision repair (TC-NER). Acts as part of a TC-NER complex which assembles and interacts with RNA polymerase II (RNAPII) when it stalls at DNA lesions. TC-NER complex subunit UVSSA binds to the GTF2H1/p62 subunit of the TFIIH transcription factor complex, tethering TFIIH to the TC-NER complex. WHR1/STK19 then interacts with the XPD helicase subunit of TFIIH which guides TFIIH to DNA downstream of the stalled RNAPII, ensuring DNA repair. Directly interacts with RNAPII and also binds to downstream DNA. Promotes the timely removal of DNA damage-stalled RNAPII, allowing downstream NER factors to access DNA lesions. Required for monoubiquitination of UVSSA. Regulates repositioning and stabilization of UVSSA within the TC-NER complex. Stimulates ubiquitination of RNAPII complex member RBP1. Also binds to RNA and regulates the expression levels of many mRNAs. The polypeptide is Winged helix repair factor 1 (Mus musculus (Mouse)).